The primary structure comprises 47 residues: Large ribosomal subunit protein bL27c (47 aa).

The tract at residues 1–21 (STKNGRDSNAQRLGVKKYGGE) is disordered.

The protein belongs to the bacterial ribosomal protein bL27 family.

The protein localises to the plastid. It is found in the chloroplast. This Porphyridium purpureum (Red alga) protein is Large ribosomal subunit protein bL27c (rpl27).